A 300-amino-acid polypeptide reads, in one-letter code: Cation-efflux pump FieF (300 aa).

4 helical membrane passes run A12–W32, I39–V59, A82–I102, and P114–F134. 2 residues coordinate Zn(2+): D45 and D49. Zn(2+)-binding residues include H153 and D157. A run of 2 helical transmembrane segments spans residues S156–H176 and A178–G198.

It belongs to the cation diffusion facilitator (CDF) transporter (TC 2.A.4) family. FieF subfamily. In terms of assembly, homodimer.

The protein resides in the cell inner membrane. The enzyme catalyses Zn(2+)(in) + H(+)(out) = Zn(2+)(out) + H(+)(in). It carries out the reaction Cd(2+)(in) + H(+)(out) = Cd(2+)(out) + H(+)(in). It catalyses the reaction Fe(2+)(in) + H(+)(out) = Fe(2+)(out) + H(+)(in). In terms of biological role, divalent metal cation transporter which exports Zn(2+), Cd(2+) and possibly Fe(2+). May be involved in zinc and iron detoxification by efflux. In Escherichia coli O127:H6 (strain E2348/69 / EPEC), this protein is Cation-efflux pump FieF.